A 355-amino-acid chain; its full sequence is Methylxanthine N3-demethylase NdmB (355 aa).

In terms of domain architecture, Rieske spans 19–131 (WHPVCTLNEF…CEVKYDIVWV (113 aa)). Positions 64, 66, 87, and 90 each coordinate [2Fe-2S] cluster.

[2Fe-2S] cluster is required as a cofactor.

It carries out the reaction theobromine + NADH + O2 + H(+) = 7-methylxanthine + formaldehyde + NAD(+) + H2O. The catalysed reaction is theobromine + NADPH + O2 + H(+) = 7-methylxanthine + formaldehyde + NADP(+) + H2O. The enzyme catalyses 3-methylxanthine + NADH + O2 + H(+) = xanthine + formaldehyde + NAD(+) + H2O. It catalyses the reaction 3-methylxanthine + NADPH + O2 + H(+) = xanthine + formaldehyde + NADP(+) + H2O. In terms of biological role, involved in the caffeine degradation, which is the essential first step for assimilating the carbon and nitrogen in caffeine. Catalyzes the N3-demethylation of theobromine to produce 7-methylxanthine and formaldehyde. Also catalyzes the N3-demethylation of 3-methylxanthine, caffeine, and theophylline to xanthine, paraxanthine, and 1-methylxanthine, respectively. NADH is the preferred substrate. This is Methylxanthine N3-demethylase NdmB (ndmB) from Pseudomonas putida (Arthrobacter siderocapsulatus).